A 397-amino-acid chain; its full sequence is Phosphoglycerate kinase (397 aa).

Substrate-binding positions include 21 to 23 (DVN), Arg36, 59 to 62 (HFGR), Arg119, and Arg152. ATP-binding positions include Lys202, Glu324, and 354-357 (GGDT).

This sequence belongs to the phosphoglycerate kinase family. As to quaternary structure, monomer.

It is found in the cytoplasm. It catalyses the reaction (2R)-3-phosphoglycerate + ATP = (2R)-3-phospho-glyceroyl phosphate + ADP. The protein operates within carbohydrate degradation; glycolysis; pyruvate from D-glyceraldehyde 3-phosphate: step 2/5. In Cereibacter sphaeroides (strain KD131 / KCTC 12085) (Rhodobacter sphaeroides), this protein is Phosphoglycerate kinase.